Reading from the N-terminus, the 207-residue chain is Large ribosomal subunit protein uL4 (207 aa).

Residues 48–89 (THKVKNRSEVSGGGRKPWRQKGTGRARQGSIRSPQWRGGGTV) form a disordered region.

It belongs to the universal ribosomal protein uL4 family. In terms of assembly, part of the 50S ribosomal subunit.

One of the primary rRNA binding proteins, this protein initially binds near the 5'-end of the 23S rRNA. It is important during the early stages of 50S assembly. It makes multiple contacts with different domains of the 23S rRNA in the assembled 50S subunit and ribosome. Its function is as follows. Forms part of the polypeptide exit tunnel. In Bacillus cytotoxicus (strain DSM 22905 / CIP 110041 / 391-98 / NVH 391-98), this protein is Large ribosomal subunit protein uL4.